The following is a 191-amino-acid chain: Transcription factor FapR (191 aa).

One can recognise a MaoC-like domain in the interval 102–169 (GIARGHHLFA…RILVTSHVNQ (68 aa)).

This sequence belongs to the FapR family.

Functionally, transcriptional factor involved in regulation of membrane lipid biosynthesis by repressing genes involved in fatty acid and phospholipid metabolism. This Shouchella clausii (strain KSM-K16) (Alkalihalobacillus clausii) protein is Transcription factor FapR.